The primary structure comprises 190 residues: Probable RNA-binding protein 18 (190 aa).

In terms of domain architecture, RRM spans 25–106 (HRLWIGNLDP…KKLVVRWAHA (82 aa)). A disordered region spans residues 166-190 (VYSYFKPPDKKRTTPYSRTAWKSRR).

In Pongo abelii (Sumatran orangutan), this protein is Probable RNA-binding protein 18 (RBM18).